We begin with the raw amino-acid sequence, 488 residues long: Probable glycine dehydrogenase (decarboxylating) subunit 2 (488 aa).

Residue K274 is modified to N6-(pyridoxal phosphate)lysine.

It belongs to the GcvP family. C-terminal subunit subfamily. As to quaternary structure, the glycine cleavage system is composed of four proteins: P, T, L and H. In this organism, the P 'protein' is a heterodimer of two subunits. Requires pyridoxal 5'-phosphate as cofactor.

The catalysed reaction is N(6)-[(R)-lipoyl]-L-lysyl-[glycine-cleavage complex H protein] + glycine + H(+) = N(6)-[(R)-S(8)-aminomethyldihydrolipoyl]-L-lysyl-[glycine-cleavage complex H protein] + CO2. In terms of biological role, the glycine cleavage system catalyzes the degradation of glycine. The P protein binds the alpha-amino group of glycine through its pyridoxal phosphate cofactor; CO(2) is released and the remaining methylamine moiety is then transferred to the lipoamide cofactor of the H protein. The protein is Probable glycine dehydrogenase (decarboxylating) subunit 2 of Listeria welshimeri serovar 6b (strain ATCC 35897 / DSM 20650 / CCUG 15529 / CIP 8149 / NCTC 11857 / SLCC 5334 / V8).